The chain runs to 258 residues: Chymotrypsin-like elastase family member 1 (258 aa).

The signal sequence occupies residues 1–8 (MLVLYGHS). Positions 9 to 18 (TQDLPETNAR) are cleaved as a propeptide — activation peptide. A Peptidase S1 domain is found at 19–256 (VVGGTEAGRN…YISWINNVIA (238 aa)). Cysteines 48 and 64 form a disulfide. The active-site Charge relay system is His-63. Residues Asp-77, Asn-79, Gln-82, and Glu-87 each contribute to the Ca(2+) site. N-linked (GlcNAc...) asparagine glycosylation occurs at Asn-79. Catalysis depends on Asp-111, which acts as the Charge relay system. 3 disulfide bridges follow: Cys-145/Cys-212, Cys-176/Cys-192, and Cys-202/Cys-232. The active-site Charge relay system is Ser-206. Residue Asn-233 is glycosylated (N-linked (GlcNAc...) asparagine).

Belongs to the peptidase S1 family. Elastase subfamily. The cofactor is Ca(2+). In terms of tissue distribution, basal layers of epidermis (at protein level). Not expressed in the pancreas.

The protein localises to the secreted. The catalysed reaction is Hydrolysis of proteins, including elastin. Preferential cleavage: Ala-|-Xaa.. In terms of biological role, serine proteases that hydrolyze many proteins in addition to elastin. The chain is Chymotrypsin-like elastase family member 1 (CELA1) from Homo sapiens (Human).